Here is a 525-residue protein sequence, read N- to C-terminus: Nuclear pore glycoprotein p62 (525 aa).

Residue S2 is modified to N-acetylserine. 5 tandem repeats follow at residues 6–7, 46–47, 78–79, 115–116, and 143–144. The 5 X 2 AA repeats of F-G stretch occupies residues 6 to 144; that stretch reads FGGTGAPAGG…GTAPTGFVFG (139 aa). The disordered stretch occupies residues 260–293; sequence LKAPGAAPGASTTSTTTTTTTTTTTASTSSSTTT. The span at 269-293 shows a compositional bias: low complexity; the sequence is ASTTSTTTTTTTTTTTASTSSSTTT. Positions 331–461 are required for centrosome localization; the sequence is MTYAQLESLI…QDLKDIIEHL (131 aa). A coiled-coil region spans residues 331–461; that stretch reads MTYAQLESLI…QDLKDIIEHL (131 aa). A phosphoserine mark is found at S411 and S421. A glycan (O-linked (GlcNAc) serine) is linked at S471.

It belongs to the nucleoporin NSP1/NUP62 family. In terms of assembly, component of the p62 complex, a complex at least composed of NUP62, NUP54, and NUP58. Interacts with NUP88. Interacts with NUTF2. Interacts with HIKESHI. Interacts with OSBPL8. Interacts with CAPG. Interacts with SAS6 and TUBG1 at the centrosome. Interacts with MCM3AP. In terms of processing, the inner channel of the NPC has a different redox environment from the cytoplasm and allows the formation of interchain disulfide bonds between some nucleoporins, the significant increase of these linkages upon oxidative stress reduces the permeability of the NPC.

It localises to the nucleus. Its subcellular location is the nuclear pore complex. The protein resides in the cytoplasm. It is found in the cytoskeleton. The protein localises to the spindle pole. It localises to the nucleus envelope. Its subcellular location is the microtubule organizing center. The protein resides in the centrosome. In terms of biological role, essential component of the nuclear pore complex. The N-terminal is probably involved in nucleocytoplasmic transport. The C-terminal is involved in protein-protein interaction probably via coiled-coil formation, promotes its association with centrosomes and may function in anchorage of p62 to the pore complex. Plays a role in mitotic cell cycle progression by regulating centrosome segregation, centriole maturation and spindle orientation. It might be involved in protein recruitment to the centrosome after nuclear breakdown. This is Nuclear pore glycoprotein p62 (Nup62) from Rattus norvegicus (Rat).